The following is a 157-amino-acid chain: Myosin regulatory light chain, striated adductor muscle (157 aa).

2 consecutive EF-hand domains span residues 16-51 (KQIQ…LGRA) and 85-120 (DSEE…MGDN). Ca(2+) is bound by residues Asp-29, Asp-31, Asp-33, and Asp-40.

In terms of biological role, in molluscan muscle, calcium regulation is associated with myosin rather than with actin. Muscle myosin contains two types of light chains: the catalytic light chain, essential for ATPase activity, and the regulatory light chain, a calcium-binding protein responsible for Ca(2+) dependent binding and Ca(2+) dependent Mg-ATPase activity. The chain is Myosin regulatory light chain, striated adductor muscle from Argopecten irradians (Bay scallop).